The following is a 338-amino-acid chain: MIWEEILNFEPYRAVEGNYRIWLDKNESPYDLPPQLKEEILEELKRIEFNRYPHITSDPLREALAEFYGLKKENIAVGNGSDELINYLVKMFKGKYIVVTSPTFGMYSFFAKLHGIPVKDIPLKEDFTIDGERIAEEGKAASAIFIASPNNPTGNSQPENEVLKVLDSGRVVILDEAYSEFSGKSFIPKISEYENLVILRTFSKAFGLAGIRCGYMIANEKIIDALYRILPPYNLNSLTMTVAIKMLEHYDIVKRRIKLIVKERERIRREFIEYSYPSEANFLLMKLDAYDYLLKKGIVVRKLSGRLEGHIRVTIGKKWENDELIKALKEFLEECRCG.

Position 204 is an N6-(pyridoxal phosphate)lysine (Lys204).

The protein belongs to the class-II pyridoxal-phosphate-dependent aminotransferase family. Histidinol-phosphate aminotransferase subfamily. Pyridoxal 5'-phosphate serves as cofactor.

It catalyses the reaction L-histidinol phosphate + 2-oxoglutarate = 3-(imidazol-4-yl)-2-oxopropyl phosphate + L-glutamate. It functions in the pathway amino-acid biosynthesis; L-histidine biosynthesis; L-histidine from 5-phospho-alpha-D-ribose 1-diphosphate: step 7/9. This Pyrococcus furiosus (strain ATCC 43587 / DSM 3638 / JCM 8422 / Vc1) protein is Histidinol-phosphate aminotransferase.